The chain runs to 618 residues: Probable peptide transporter ptr2 (618 aa).

Position 22 is a phosphoserine (S22). Y23 carries the post-translational modification Phosphotyrosine. Residues S25 and S33 each carry the phosphoserine modification. Residues 26–50 (KEKKADGSATINTADEQSSTDELQK) form a disordered region. The span at 34-50 (ATINTADEQSSTDELQK) shows a compositional bias: polar residues. Residue T35 is modified to Phosphothreonine. S44 is modified (phosphoserine). Residue T45 is modified to Phosphothreonine. A phosphoserine mark is found at S51 and S53. The residue at position 54 (T54) is a Phosphothreonine. 10 consecutive transmembrane segments (helical) span residues 131-151 (GLSNFFTFWCYVTPVGAALIA), 161-181 (IVCSAVIYFIGILILTCTAIP), 187-207 (GKSMGGFVVSLIIIGLGTGGI), 247-267 (YMIFYWSINVGSLSVLATTSL), 273-293 (FVYAYLLPLCVFVIPLIILAV), 400-420 (FDSIALIIFIPICDNIIYPLL), 430-450 (ILRITLGFMFATASMIYAAVL), 475-495 (VWIQIPAYVLIAFSEIFASIT), 510-530 (SIITALFLFTNAFGAILSICI), and 541-561 (WMYTGIAVTAFIAGIMFWVCF). S594 is subject to Phosphoserine. Phosphothreonine is present on T618.

Belongs to the major facilitator superfamily. Proton-dependent oligopeptide transporter (POT/PTR) (TC 2.A.17) family.

It localises to the membrane. In terms of biological role, uptake of small peptides. The sequence is that of Probable peptide transporter ptr2 (ptr2) from Schizosaccharomyces pombe (strain 972 / ATCC 24843) (Fission yeast).